A 454-amino-acid chain; its full sequence is tRNA modification GTPase MnmE (454 aa).

Positions 23, 80, and 120 each coordinate (6S)-5-formyl-5,6,7,8-tetrahydrofolate. The TrmE-type G domain maps to 216–377 (GMKVVIAGRP…LRNHLKQSMG (162 aa)). N226 lines the K(+) pocket. Residues 226-231 (NAGKSS), 245-251 (TDIAGTT), 270-273 (DTAG), 335-338 (NKAD), and 358-360 (SAR) each bind GTP. Position 230 (S230) interacts with Mg(2+). K(+) contacts are provided by T245, I247, and T250. T251 lines the Mg(2+) pocket. (6S)-5-formyl-5,6,7,8-tetrahydrofolate is bound at residue K454.

The protein belongs to the TRAFAC class TrmE-Era-EngA-EngB-Septin-like GTPase superfamily. TrmE GTPase family. In terms of assembly, homodimer. Heterotetramer of two MnmE and two MnmG subunits. K(+) is required as a cofactor.

Its subcellular location is the cytoplasm. In terms of biological role, exhibits a very high intrinsic GTPase hydrolysis rate. Involved in the addition of a carboxymethylaminomethyl (cmnm) group at the wobble position (U34) of certain tRNAs, forming tRNA-cmnm(5)s(2)U34. The polypeptide is tRNA modification GTPase MnmE (Salmonella paratyphi C (strain RKS4594)).